The chain runs to 307 residues: Transaldolase (307 aa).

The active-site Schiff-base intermediate with substrate is lysine 125.

It belongs to the transaldolase family. Type 1 subfamily. In terms of assembly, homodimer.

The protein resides in the cytoplasm. It carries out the reaction D-sedoheptulose 7-phosphate + D-glyceraldehyde 3-phosphate = D-erythrose 4-phosphate + beta-D-fructose 6-phosphate. It participates in carbohydrate degradation; pentose phosphate pathway; D-glyceraldehyde 3-phosphate and beta-D-fructose 6-phosphate from D-ribose 5-phosphate and D-xylulose 5-phosphate (non-oxidative stage): step 2/3. In terms of biological role, transaldolase is important for the balance of metabolites in the pentose-phosphate pathway. The chain is Transaldolase from Pseudomonas aeruginosa (strain LESB58).